The chain runs to 157 residues: Cell cycle regulator of non-homologous end joining (157 aa).

N-acetylmethionine is present on Met-1. The KBM signature appears at 1–21 (METLKSKTKTRVLPSWMTAPV). Residues 80-91 (KPWEQRSLEATD) are compositionally biased toward basic and acidic residues. The tract at residues 80 to 148 (KPWEQRSLEA…EEEKEEEDAL (69 aa)) is disordered. Residues 96–106 (SPPCSSSPGSS) show a composition bias toward low complexity. The XLM signature appears at 147-157 (ALKYVREIFFS).

In terms of assembly, interacts (via KBM motif) with XRCC5/Ku80 and XRCC6/Ku70 heterodimer. Interacts (via XLF motif) with TRIM28/KAP1, ATM, MRE11, NBN and RAD50. Interacts with splicing factor SF3B1. Interacts with ERCC6L2; this interaction is DNA independent.

The protein resides in the cytoplasm. It is found in the nucleus. It localises to the chromosome. Its function is as follows. Cell-cycle-specific regulator of classical non-homologous end joining (NHEJ) of DNA double-strand break (DSB) repair, which can act both as an activator or inhibitor of NHEJ, depending on the cell cycle phase. Acts as a regulator of DNA repair pathway choice by specifically inhibiting classical NHEJ during the S and G2 phases, thereby promoting error-free repair by homologous recombination during cell cycle phases when sister chromatids are present. Preferentially protects single-stranded overhangs at break sites by inhibiting classical NHEJ, thereby creating a local environment that favors homologous recombination. Acts via interaction with XRCC5/Ku80 and XRCC6/Ku70. In contrast, acts as an activator of NHEJ during G1 phase of the cell cycle: promotes classical NHEJ in G1 phase cells via multivalent interactions that increase the affinity of DNA damage response proteins for DSB-associated chromatin. Also involved in immunoglobulin V(D)J recombination. May also act as an indirect regulator of proteasome. This is Cell cycle regulator of non-homologous end joining from Mus musculus (Mouse).